Reading from the N-terminus, the 331-residue chain is Ketol-acid reductoisomerase (NADP(+)) (331 aa).

The KARI N-terminal Rossmann domain occupies 2-182 (AQLFYDSDAD…GGTRAGILET (181 aa)). NADP(+)-binding positions include 25-28 (YGSQ), S51, S53, and 83-86 (DEFQ). The active site involves H108. G134 lines the NADP(+) pocket. The 146-residue stretch at 183–328 (NFKEETETDL…KGLRAMFSWL (146 aa)) folds into the KARI C-terminal knotted domain. 4 residues coordinate Mg(2+): D191, E195, E227, and E231. S252 contributes to the substrate binding site.

It belongs to the ketol-acid reductoisomerase family. Requires Mg(2+) as cofactor.

The enzyme catalyses (2R)-2,3-dihydroxy-3-methylbutanoate + NADP(+) = (2S)-2-acetolactate + NADPH + H(+). The catalysed reaction is (2R,3R)-2,3-dihydroxy-3-methylpentanoate + NADP(+) = (S)-2-ethyl-2-hydroxy-3-oxobutanoate + NADPH + H(+). It functions in the pathway amino-acid biosynthesis; L-isoleucine biosynthesis; L-isoleucine from 2-oxobutanoate: step 2/4. It participates in amino-acid biosynthesis; L-valine biosynthesis; L-valine from pyruvate: step 2/4. Functionally, involved in the biosynthesis of branched-chain amino acids (BCAA). Catalyzes an alkyl-migration followed by a ketol-acid reduction of (S)-2-acetolactate (S2AL) to yield (R)-2,3-dihydroxy-isovalerate. In the isomerase reaction, S2AL is rearranged via a Mg-dependent methyl migration to produce 3-hydroxy-3-methyl-2-ketobutyrate (HMKB). In the reductase reaction, this 2-ketoacid undergoes a metal-dependent reduction by NADPH to yield (R)-2,3-dihydroxy-isovalerate. The polypeptide is Ketol-acid reductoisomerase (NADP(+)) (Prochlorococcus marinus (strain MIT 9303)).